A 299-amino-acid chain; its full sequence is tRNA dimethylallyltransferase (299 aa).

An ATP-binding site is contributed by 5–12 (GPTASGKT). 7–12 (TASGKT) lines the substrate pocket. Interaction with substrate tRNA stretches follow at residues 30 to 33 (DSAL), 154 to 158 (QRLSR), and 235 to 240 (RCVGYR).

It belongs to the IPP transferase family. Monomer. Mg(2+) is required as a cofactor.

The catalysed reaction is adenosine(37) in tRNA + dimethylallyl diphosphate = N(6)-dimethylallyladenosine(37) in tRNA + diphosphate. Catalyzes the transfer of a dimethylallyl group onto the adenine at position 37 in tRNAs that read codons beginning with uridine, leading to the formation of N6-(dimethylallyl)adenosine (i(6)A). This is tRNA dimethylallyltransferase from Shewanella denitrificans (strain OS217 / ATCC BAA-1090 / DSM 15013).